Consider the following 177-residue polypeptide: Acireductone dioxygenase (177 aa).

4 residues coordinate Fe(2+): histidine 97, histidine 99, glutamate 103, and histidine 141. Ni(2+) is bound by residues histidine 97, histidine 99, glutamate 103, and histidine 141.

It belongs to the acireductone dioxygenase (ARD) family. As to quaternary structure, monomer. The cofactor is Fe(2+). It depends on Ni(2+) as a cofactor.

The catalysed reaction is 1,2-dihydroxy-5-(methylsulfanyl)pent-1-en-3-one + O2 = 3-(methylsulfanyl)propanoate + CO + formate + 2 H(+). It carries out the reaction 1,2-dihydroxy-5-(methylsulfanyl)pent-1-en-3-one + O2 = 4-methylsulfanyl-2-oxobutanoate + formate + 2 H(+). It participates in amino-acid biosynthesis; L-methionine biosynthesis via salvage pathway; L-methionine from S-methyl-5-thio-alpha-D-ribose 1-phosphate: step 5/6. Its function is as follows. Catalyzes 2 different reactions between oxygen and the acireductone 1,2-dihydroxy-3-keto-5-methylthiopentene (DHK-MTPene) depending upon the metal bound in the active site. Fe-containing acireductone dioxygenase (Fe-ARD) produces formate and 2-keto-4-methylthiobutyrate (KMTB), the alpha-ketoacid precursor of methionine in the methionine recycle pathway. Ni-containing acireductone dioxygenase (Ni-ARD) produces methylthiopropionate, carbon monoxide and formate, and does not lie on the methionine recycle pathway. This Leptospira biflexa serovar Patoc (strain Patoc 1 / ATCC 23582 / Paris) protein is Acireductone dioxygenase.